Reading from the N-terminus, the 310-residue chain is Alpha/beta hydrolase domain-containing protein 17C (310 aa).

Active-site charge relay system residues include serine 192, aspartate 257, and histidine 286.

This sequence belongs to the AB hydrolase superfamily. ABHD17 family. In terms of processing, palmitoylated on cysteine residues located in a cysteine cluster at the N-terminus which promotes membrane localization.

The protein localises to the recycling endosome membrane. The protein resides in the cell projection. It is found in the dendritic spine. It localises to the postsynaptic density membrane. The enzyme catalyses S-hexadecanoyl-L-cysteinyl-[protein] + H2O = L-cysteinyl-[protein] + hexadecanoate + H(+). Its function is as follows. Hydrolyzes fatty acids from S-acylated cysteine residues in proteins. The polypeptide is Alpha/beta hydrolase domain-containing protein 17C (Xenopus tropicalis (Western clawed frog)).